A 585-amino-acid chain; its full sequence is Arginine--tRNA ligase (585 aa).

The short motif at 131–141 is the 'HIGH' region element; that stretch reads ANPTGPMHVGH.

Belongs to the class-I aminoacyl-tRNA synthetase family. As to quaternary structure, monomer.

The protein localises to the cytoplasm. It carries out the reaction tRNA(Arg) + L-arginine + ATP = L-arginyl-tRNA(Arg) + AMP + diphosphate. The sequence is that of Arginine--tRNA ligase from Bartonella quintana (strain Toulouse) (Rochalimaea quintana).